We begin with the raw amino-acid sequence, 313 residues long: Ribosomal RNA small subunit methyltransferase H (313 aa).

Residues 35–37 (GGH), aspartate 55, phenylalanine 79, aspartate 101, and glutamine 108 each bind S-adenosyl-L-methionine.

Belongs to the methyltransferase superfamily. RsmH family.

It is found in the cytoplasm. It carries out the reaction cytidine(1402) in 16S rRNA + S-adenosyl-L-methionine = N(4)-methylcytidine(1402) in 16S rRNA + S-adenosyl-L-homocysteine + H(+). In terms of biological role, specifically methylates the N4 position of cytidine in position 1402 (C1402) of 16S rRNA. The sequence is that of Ribosomal RNA small subunit methyltransferase H from Salmonella arizonae (strain ATCC BAA-731 / CDC346-86 / RSK2980).